A 293-amino-acid chain; its full sequence is Methylsterol monooxygenase 1 (293 aa).

A run of 2 helical transmembrane segments spans residues 55–75 (LIVHEALYFSFCLPGFLFQFI) and 100–120 (VLLFNHFCIQLPLICGTYYFT). Residues 145 to 274 (CAVIEDTWHY…FTWWDRIFGT (130 aa)) form the Fatty acid hydroxylase domain. Positions 157 to 161 (HRLLH) match the Histidine box-1 motif. The Histidine box-2 signature appears at 170 to 174 (HKVHH). Residues 199-219 (FFIGIVLLCDHVILLWAWVTI) traverse the membrane as a helical segment. A Histidine box-3 motif is present at residues 249 to 255 (HHDFHHM).

The protein belongs to the sterol desaturase family. The cofactor is Fe cation. Post-translationally, ubiquitinated by MARCHF6, leading to proteasomal degradation.

Its subcellular location is the endoplasmic reticulum membrane. It catalyses the reaction 4,4-dimethyl-5alpha-cholest-7-en-3beta-ol + 6 Fe(II)-[cytochrome b5] + 3 O2 + 5 H(+) = 4alpha-carboxy-4beta-methyl-5alpha-cholest-7-ene-3beta-ol + 6 Fe(III)-[cytochrome b5] + 4 H2O. The enzyme catalyses 4,4-dimethyl-5alpha-cholesta-8,24-dien-3beta-ol + 6 Fe(II)-[cytochrome b5] + 3 O2 + 5 H(+) = 4beta-methylzymosterol-4alpha-carboxylate + 6 Fe(III)-[cytochrome b5] + 4 H2O. It carries out the reaction 4alpha-methylzymosterol + 6 Fe(II)-[cytochrome b5] + 3 O2 + 5 H(+) = 4alpha-carboxyzymosterol + 6 Fe(III)-[cytochrome b5] + 4 H2O. The catalysed reaction is 4alpha-methyl-5alpha-cholest-7-en-3beta-ol + 6 Fe(II)-[cytochrome b5] + 3 O2 + 5 H(+) = 4alpha-carboxy-5alpha-cholest-7-en-3beta-ol + 6 Fe(III)-[cytochrome b5] + 4 H2O. It catalyses the reaction 4,4-dimethyl-5alpha-cholest-8-en-3beta-ol + 6 Fe(II)-[cytochrome b5] + 3 O2 + 5 H(+) = 4alpha-carboxy-4beta-methyl-5alpha-cholest-8-en-3beta-ol + 6 Fe(III)-[cytochrome b5] + 4 H2O. The enzyme catalyses 4alpha-methyl-5alpha-cholest-8-en-3beta-ol + 6 Fe(II)-[cytochrome b5] + 3 O2 + 5 H(+) = 4alpha-carboxy-5alpha-cholest-8-ene-3beta-ol + 6 Fe(III)-[cytochrome b5] + 4 H2O. It functions in the pathway steroid biosynthesis; zymosterol biosynthesis; zymosterol from lanosterol: step 3/6. The protein operates within steroid biosynthesis; cholesterol biosynthesis. Catalyzes the three-step monooxygenation required for the demethylation of 4,4-dimethyl and 4alpha-methylsterols, which can be subsequently metabolized to cholesterol. This chain is Methylsterol monooxygenase 1 (MSMO1), found in Macaca fascicularis (Crab-eating macaque).